The chain runs to 92 residues: MWPVFWTVVRTYAPYVTFPVAFVVGAVGYHLEWFIRGKDPQPVEEEKSISERREDRKLDELLGKDHTQVVSLKDKLEFAPKAVLNRNRPEKN.

The chain crosses the membrane as a helical span at residues Y15 to F34.

The protein belongs to the SMIM12 family.

It localises to the membrane. This is Small integral membrane protein 12 (SMIM12) from Nomascus leucogenys (Northern white-cheeked gibbon).